We begin with the raw amino-acid sequence, 277 residues long: Large ribosomal subunit protein uL2 (277 aa).

2 disordered regions span residues 32–58 (KSLTKGKVSRAGRDSSGRISVRRRGGG) and 225–277 (VAMN…RRNN).

This sequence belongs to the universal ribosomal protein uL2 family. As to quaternary structure, part of the 50S ribosomal subunit. Forms a bridge to the 30S subunit in the 70S ribosome.

Functionally, one of the primary rRNA binding proteins. Required for association of the 30S and 50S subunits to form the 70S ribosome, for tRNA binding and peptide bond formation. It has been suggested to have peptidyltransferase activity; this is somewhat controversial. Makes several contacts with the 16S rRNA in the 70S ribosome. The chain is Large ribosomal subunit protein uL2 from Borrelia duttonii (strain Ly).